Reading from the N-terminus, the 726-residue chain is Catalase-peroxidase (726 aa).

A cross-link (tryptophyl-tyrosyl-methioninium (Trp-Tyr) (with M-240)) is located at residues 91–214 (WHAAGTYRIG…LAAVQMGLIY (124 aa)). The active-site Proton acceptor is the histidine 92. Positions 214–240 (YVNPEGPNGNPDPVAAAIDIRETFRRM) form a cross-link, tryptophyl-tyrosyl-methioninium (Tyr-Met) (with W-91). Residue histidine 255 coordinates heme b. Positions 335–362 (AHQWKPKGNAGAGTVPDPADPSKRRSPS) are disordered.

This sequence belongs to the peroxidase family. Peroxidase/catalase subfamily. In terms of assembly, homodimer or homotetramer. Heme b serves as cofactor. In terms of processing, formation of the three residue Trp-Tyr-Met cross-link is important for the catalase, but not the peroxidase activity of the enzyme.

The enzyme catalyses H2O2 + AH2 = A + 2 H2O. It carries out the reaction 2 H2O2 = O2 + 2 H2O. Functionally, bifunctional enzyme with both catalase and broad-spectrum peroxidase activity. In Cupriavidus metallidurans (strain ATCC 43123 / DSM 2839 / NBRC 102507 / CH34) (Ralstonia metallidurans), this protein is Catalase-peroxidase.